Reading from the N-terminus, the 882-residue chain is Piwi-like protein 3 (882 aa).

Positions 1-15 are enriched in basic residues; that stretch reads MPGRARTRARGRARR. Residues 1–91 are disordered; that stretch reads MPGRARTRAR…EAGLHTAPLQ (91 aa). Residues 32–46 show a composition bias toward polar residues; the sequence is SATTQEPPQLQSTPR. The PAZ domain maps to 293–406; sequence TAYDFIKRTS…LIPQLCHMTG (114 aa). Positions 578–868 constitute a Piwi domain; it reads KVICILPNDD…LAYLVGQSIH (291 aa).

Belongs to the argonaute family. Piwi subfamily. Expressed in testis.

The protein localises to the cytoplasm. Its function is as follows. May play a role during spermatogenesis by repressing transposable elements and preventing their mobilization, which is essential for the germline integrity. Acts via the piRNA metabolic process, which mediates the repression of transposable elements during meiosis by forming complexes composed of piRNAs and Piwi proteins and govern the methylation and subsequent repression of transposons. Directly binds piRNAs, a class of 24 to 30 nucleotide RNAs that are generated by a Dicer-independent mechanism and are primarily derived from transposons and other repeated sequence elements. Besides their function in transposable elements repression, piRNAs are probably involved in other processes during meiosis such as translation regulation. The sequence is that of Piwi-like protein 3 (PIWIL3) from Homo sapiens (Human).